Reading from the N-terminus, the 1138-residue chain is Exportin-6-B (1138 aa).

Residues 31-97 enclose the Importin N-terminal domain; it reads IESLLNNFAQ…RSSLPKLLLS (67 aa). The span at 291-307 shows a compositional bias: low complexity; it reads SVTTNTTSSVVNGGSSS. The segment at 291-315 is disordered; it reads SVTTNTTSSVVNGGSSSPPLHSAAP.

It belongs to the exportin family.

The protein resides in the nucleus. The protein localises to the cytoplasm. Its function is as follows. Mediates the nuclear export of actin and profilin-actin complexes in somatic cells. Oocyte nuclei lack active actin export. Functionally, mediates the nuclear export of actin and profilin-actin complexes in somatic cells. This Xenopus laevis (African clawed frog) protein is Exportin-6-B (xpo6-b).